Here is a 188-residue protein sequence, read N- to C-terminus: Peptidyl-tRNA hydrolase (188 aa).

Tyrosine 14 contacts tRNA. The active-site Proton acceptor is histidine 19. TRNA is bound by residues tyrosine 64, asparagine 66, and asparagine 112.

This sequence belongs to the PTH family. Monomer.

It localises to the cytoplasm. The catalysed reaction is an N-acyl-L-alpha-aminoacyl-tRNA + H2O = an N-acyl-L-amino acid + a tRNA + H(+). Functionally, hydrolyzes ribosome-free peptidyl-tRNAs (with 1 or more amino acids incorporated), which drop off the ribosome during protein synthesis, or as a result of ribosome stalling. Catalyzes the release of premature peptidyl moieties from peptidyl-tRNA molecules trapped in stalled 50S ribosomal subunits, and thus maintains levels of free tRNAs and 50S ribosomes. The chain is Peptidyl-tRNA hydrolase from Bacillus pumilus (strain SAFR-032).